Consider the following 381-residue polypeptide: NAD-dependent methanol dehydrogenase (381 aa).

The protein belongs to the iron-containing alcohol dehydrogenase family. In terms of assembly, homodecamer. Requires Mg(2+) as cofactor. It depends on Zn(2+) as a cofactor.

The protein resides in the cytoplasm. It carries out the reaction methanol + NAD(+) = formaldehyde + NADH + H(+). It functions in the pathway one-carbon metabolism; methanol degradation; formaldehyde from methanol: step 1/1. Its activity is regulated as follows. Stimulated by the activator protein Act which requires the presence of magnesium ions. Inhibited by 1,10-phenanthroline. In terms of biological role, catalyzes the oxidation of methanol to yield formaldehyde. It possesses a NADH-dependent formaldehyde reductase activity and cannot use NADP. The chain is NAD-dependent methanol dehydrogenase from Bacillus methanolicus.